A 248-amino-acid polypeptide reads, in one-letter code: tRNA (guanine-N(1)-)-methyltransferase (248 aa).

Residues G126 and L150 to L155 each bind S-adenosyl-L-methionine. A disordered region spans residues W224–D248. A compositionally biased stretch (basic and acidic residues) spans T227–D239.

Belongs to the RNA methyltransferase TrmD family. In terms of assembly, homodimer.

It localises to the cytoplasm. It carries out the reaction guanosine(37) in tRNA + S-adenosyl-L-methionine = N(1)-methylguanosine(37) in tRNA + S-adenosyl-L-homocysteine + H(+). Its function is as follows. Specifically methylates guanosine-37 in various tRNAs. This is tRNA (guanine-N(1)-)-methyltransferase from Micrococcus luteus (strain ATCC 4698 / DSM 20030 / JCM 1464 / CCM 169 / CCUG 5858 / IAM 1056 / NBRC 3333 / NCIMB 9278 / NCTC 2665 / VKM Ac-2230) (Micrococcus lysodeikticus).